An 87-amino-acid chain; its full sequence is Small ribosomal subunit protein bS16 (87 aa).

Belongs to the bacterial ribosomal protein bS16 family.

This is Small ribosomal subunit protein bS16 from Psychrobacter sp. (strain PRwf-1).